The primary structure comprises 311 residues: Transmembrane protein DDB_G0273707/DDB_G0273361 (311 aa).

Residues M1 to N113 are disordered. N8 is a glycosylation site (N-linked (GlcNAc...) asparagine). Residues L9–T18 show a composition bias toward polar residues. N-linked (GlcNAc...) asparagine glycosylation is found at N35, N38, N62, and N76. Composition is skewed to low complexity over residues S37–N67 and N76–E111. Positions N95–L124 form a coiled coil. 5 consecutive transmembrane segments (helical) span residues L150–L170, I181–P201, L208–Y228, V235–H255, and F276–I296.

It localises to the membrane. This chain is Transmembrane protein DDB_G0273707/DDB_G0273361, found in Dictyostelium discoideum (Social amoeba).